The primary structure comprises 282 residues: Phycocyanobilin lyase subunit beta (282 aa).

The protein belongs to the CpcE/RpcE/PecE family. In terms of assembly, cpcE and CpcF associate to form a lyase.

In terms of biological role, required for the chromophorylation of the CpcA gene product. The chain is Phycocyanobilin lyase subunit beta (cpcF1) from Pseudanabaena tenuis (strain PCC 7409).